We begin with the raw amino-acid sequence, 462 residues long: tRNA modification GTPase MnmE (462 aa).

(6S)-5-formyl-5,6,7,8-tetrahydrofolate contacts are provided by Arg23, Glu88, and Arg127. One can recognise a TrmE-type G domain in the interval 224 to 383 (GLATVIIGRP…LEKAIADLFF (160 aa)). A K(+)-binding site is contributed by Asn234. GTP contacts are provided by residues 234–239 (NVGKSS), 253–259 (TDIPGTT), and 278–281 (DTAG). Mg(2+) is bound at residue Ser238. The K(+) site is built by Thr253, Ile255, and Thr258. Mg(2+) is bound at residue Thr259. Lys462 contributes to the (6S)-5-formyl-5,6,7,8-tetrahydrofolate binding site.

Belongs to the TRAFAC class TrmE-Era-EngA-EngB-Septin-like GTPase superfamily. TrmE GTPase family. As to quaternary structure, homodimer. Heterotetramer of two MnmE and two MnmG subunits. It depends on K(+) as a cofactor.

It localises to the cytoplasm. Exhibits a very high intrinsic GTPase hydrolysis rate. Involved in the addition of a carboxymethylaminomethyl (cmnm) group at the wobble position (U34) of certain tRNAs, forming tRNA-cmnm(5)s(2)U34. The polypeptide is tRNA modification GTPase MnmE (Geobacillus thermodenitrificans (strain NG80-2)).